Reading from the N-terminus, the 529-residue chain is Isoleucine--tRNA ligase (529 aa).

Position 482 (Glu-482) interacts with L-isoleucyl-5'-AMP. The 'KMSKS' region motif lies at 523 to 527 (KMSKS). Lys-526 lines the ATP pocket.

Belongs to the class-I aminoacyl-tRNA synthetase family. IleS type 1 subfamily. Monomer.

It is found in the cytoplasm. The catalysed reaction is tRNA(Ile) + L-isoleucine + ATP = L-isoleucyl-tRNA(Ile) + AMP + diphosphate. Catalyzes the attachment of isoleucine to tRNA(Ile). As IleRS can inadvertently accommodate and process structurally similar amino acids such as valine, to avoid such errors it has two additional distinct tRNA(Ile)-dependent editing activities. One activity is designated as 'pretransfer' editing and involves the hydrolysis of activated Val-AMP. The other activity is designated 'posttransfer' editing and involves deacylation of mischarged Val-tRNA(Ile). This is Isoleucine--tRNA ligase (ileS) from Aquifex pyrophilus.